We begin with the raw amino-acid sequence, 332 residues long: Beta-ketoacyl-[acyl-carrier-protein] synthase III (332 aa).

Residues Cys114 and His255 contribute to the active site. Positions 256 to 260 (QANLR) are ACP-binding. Asn285 is an active-site residue.

It belongs to the thiolase-like superfamily. FabH family. Homodimer.

The protein localises to the cytoplasm. The catalysed reaction is malonyl-[ACP] + acetyl-CoA + H(+) = 3-oxobutanoyl-[ACP] + CO2 + CoA. It functions in the pathway lipid metabolism; fatty acid biosynthesis. In terms of biological role, catalyzes the condensation reaction of fatty acid synthesis by the addition to an acyl acceptor of two carbons from malonyl-ACP. Catalyzes the first condensation reaction which initiates fatty acid synthesis and may therefore play a role in governing the total rate of fatty acid production. Possesses both acetoacetyl-ACP synthase and acetyl transacylase activities. Its substrate specificity determines the biosynthesis of branched-chain and/or straight-chain of fatty acids. This is Beta-ketoacyl-[acyl-carrier-protein] synthase III from Sulfurimonas denitrificans (strain ATCC 33889 / DSM 1251) (Thiomicrospira denitrificans (strain ATCC 33889 / DSM 1251)).